The chain runs to 520 residues: GMP synthase [glutamine-hydrolyzing] (520 aa).

The Glutamine amidotransferase type-1 domain maps to 9-202; it reads TVLIVDFGSQ…VHNIAGIEGD (194 aa). C86 functions as the Nucleophile in the catalytic mechanism. Residues H176 and E178 contribute to the active site. In terms of domain architecture, GMPS ATP-PPase spans 203 to 395; sequence WTMRAYREHA…LGLPESFIGR (193 aa). Residue 230-236 participates in ATP binding; sequence SGGVDSS.

Homodimer.

It carries out the reaction XMP + L-glutamine + ATP + H2O = GMP + L-glutamate + AMP + diphosphate + 2 H(+). It functions in the pathway purine metabolism; GMP biosynthesis; GMP from XMP (L-Gln route): step 1/1. Its function is as follows. Catalyzes the synthesis of GMP from XMP. The sequence is that of GMP synthase [glutamine-hydrolyzing] from Mesorhizobium japonicum (strain LMG 29417 / CECT 9101 / MAFF 303099) (Mesorhizobium loti (strain MAFF 303099)).